The chain runs to 398 residues: Succinate--CoA ligase [ADP-forming] subunit beta (398 aa).

Residues 9–254 (KRLLHEYGAP…TSEEDPKEIE (246 aa)) enclose the ATP-grasp domain. Residues Lys-46, 53–55 (GRG), Glu-109, Ala-112, and Glu-117 contribute to the ATP site. Residues Asn-209 and Asp-223 each coordinate Mg(2+). Residues Asn-274 and 331-333 (GIM) each bind substrate.

It belongs to the succinate/malate CoA ligase beta subunit family. In terms of assembly, heterotetramer of two alpha and two beta subunits. Requires Mg(2+) as cofactor.

The enzyme catalyses succinate + ATP + CoA = succinyl-CoA + ADP + phosphate. It carries out the reaction GTP + succinate + CoA = succinyl-CoA + GDP + phosphate. It functions in the pathway carbohydrate metabolism; tricarboxylic acid cycle; succinate from succinyl-CoA (ligase route): step 1/1. Succinyl-CoA synthetase functions in the citric acid cycle (TCA), coupling the hydrolysis of succinyl-CoA to the synthesis of either ATP or GTP and thus represents the only step of substrate-level phosphorylation in the TCA. The beta subunit provides nucleotide specificity of the enzyme and binds the substrate succinate, while the binding sites for coenzyme A and phosphate are found in the alpha subunit. This Bartonella henselae (strain ATCC 49882 / DSM 28221 / CCUG 30454 / Houston 1) (Rochalimaea henselae) protein is Succinate--CoA ligase [ADP-forming] subunit beta.